Reading from the N-terminus, the 1712-residue chain is Gag-Pol polyprotein (1712 aa).

Gly2 carries the N-myristoyl glycine; by host lipid modification. Disordered stretches follow at residues 97 to 208, 416 to 440, and 487 to 518; these read VRPF…NRPQ, RETPEEREERLWQRQEERDKKRHKE, and DCPKRPRKKPANSTLLNLGDQESQGQDPPPEP. Residues 100–119 show a composition bias toward pro residues; the sequence is FLPPPKPPTPLPQPLSPQPS. The PTAP/PSAP motif signature appears at 107-110; that stretch reads PTPL. Positions 120–132 are enriched in low complexity; that stretch reads APLTSSLYPVLPK. Positions 126 to 130 match the LYPX(n)L motif motif; sequence LYPVL. Composition is skewed to pro residues over residues 136 to 146 and 156 to 171; these read PKPPVLPPDPS and EPPPYPGGHGPPPSGP. The PPXY motif motif lies at 157–160; sequence PPPY. Basic and acidic residues predominate over residues 416-434; that stretch reads RETPEEREERLWQRQEERD. The CCHC-type zinc-finger motif lies at 473–490; it reads DQCAYCKEKGHWVRDCPK. Over residues 497 to 512 the composition is skewed to polar residues; the sequence is ANSTLLNLGDQESQGQ. Residues 529 to 599 enclose the Peptidase A2 domain; it reads VTFLVDTGAQ…CPYPLLGRDL (71 aa). Asp534 acts as the Protease; shared with dimeric partner in catalysis. The Reverse transcriptase domain occupies 708–899; the sequence is LDQGILKPCQ…QEVTYLGYSL (192 aa). Residues Asp776, Asp850, Asp851, Asp1150, Glu1188, Asp1209, and Asp1279 each contribute to the Mg(2+) site. The region spanning 1141–1287 is the RNase H type-1 domain; sequence PDADLTWYTD…ADDTAKKAAT (147 aa). Residues 1262–1289 form a disordered region; that stretch reads PGHQKGDSPQAKGNRLADDTAKKAATET. Residues 1276–1287 show a composition bias toward basic and acidic residues; it reads RLADDTAKKAAT. The segment at 1354 to 1394 adopts an HHCC-type zinc-finger fold; the sequence is HKLTHLSARKMKTLLEREETGFYLPNRDLHLRQVTESCRAC. The Integrase catalytic domain maps to 1411–1569; the sequence is RGRRPGTHWE…TPFEILYGAP (159 aa). Residues Asp1422 and Asp1481 each coordinate Mg(2+). Residues 1676 to 1703 form a disordered region; sequence GPTTNQDLSDSPSSDDPSRWKVQRTQNP.

Belongs to the retroviral Pol polyprotein family. Homohexamer; further associates as homomultimer. The virus core is composed of a lattice formed from hexagonal rings, each containing six capsid monomers. In terms of assembly, interacts (via PPXY motif) with host NEDD4. Interacts (via PSAP motif) with host TSG101. Interacts (via LYPX(n)L motif) with host PDCD6IP. As to quaternary structure, the reverse transcriptase is a monomer (Potential). Interacts (via RNase domains) with host release factor ETF1; this interaction is essential for translational readthrough of amber codon between viral gag and pol genes, as well as for viral replication. Homodimer. Mg(2+) is required as a cofactor. Post-translationally, specific enzymatic cleavages by the viral protease yield mature proteins. The protease is released by autocatalytic cleavage. The polyprotein is cleaved during and after budding, this process is termed maturation. Phosphorylated on serine residues.

The protein localises to the virion. The protein resides in the host cell membrane. Its subcellular location is the host late endosome membrane. It localises to the host endosome. It is found in the host multivesicular body. The protein localises to the host cytoplasm. It carries out the reaction DNA(n) + a 2'-deoxyribonucleoside 5'-triphosphate = DNA(n+1) + diphosphate. The enzyme catalyses Endonucleolytic cleavage to 5'-phosphomonoester.. Most efficiently inhibited by Amprenavir, which is able to block Gag-Pol processing in infected cells. Its function is as follows. Plays a role in budding and is processed by the viral protease during virion maturation outside the cell. During budding, it recruits, in a PPXY-dependent or independent manner, Nedd4-like ubiquitin ligases that conjugate ubiquitin molecules to Gag-Pol, or to Gag-Pol binding host factors. Interaction with HECT ubiquitin ligases probably links the viral protein to the host ESCRT pathway and facilitates release. Targets Gag and gag-pol polyproteins to the plasma membrane via a multipartite membrane binding signal, that includes its myristoylated N-terminus. Also mediates nuclear localization of the pre-integration complex. In terms of biological role, constituent of the pre-integration complex (PIC) which tethers the latter to mitotic chromosomes. This allows the integration of the viral genome into the host DNA. Functionally, forms the spherical core of the virion that encapsulates the genomic RNA-nucleocapsid complex. Its function is as follows. Involved in the packaging and encapsidation of two copies of the genome. Binds with high affinity to conserved UCUG elements within the packaging signal, located near the 5'-end of the genome. This binding is dependent on genome dimerization. Acts as a nucleic acid chaperone which is involved in rearrangement of nucleic acid secondary structures during gRNA retrotranscription. The aspartyl protease mediates proteolytic cleavages of Gag and Gag-Pol polyproteins during or shortly after the release of the virion from the plasma membrane. Cleavages take place as an ordered, step-wise cascade to yield mature proteins. This process is called maturation. Displays maximal activity during the budding process just prior to particle release from the cell. In terms of biological role, RT is a multifunctional enzyme that converts the viral dimeric RNA genome into dsDNA in the cytoplasm, shortly after virus entry into the cell. This enzyme displays a DNA polymerase activity that can copy either DNA or RNA templates, and a ribonuclease H (RNase H) activity that cleaves the RNA strand of RNA-DNA heteroduplexes in a partially processive 3' to 5' endonucleasic mode. Conversion of viral genomic RNA into dsDNA requires many steps. A tRNA binds to the primer-binding site (PBS) situated at the 5' end of the viral RNA. RT uses the 3' end of the tRNA primer to perform a short round of RNA-dependent minus-strand DNA synthesis. The reading proceeds through the U5 region and ends after the repeated (R) region which is present at both ends of viral RNA. The portion of the RNA-DNA heteroduplex is digested by the RNase H, resulting in a ssDNA product attached to the tRNA primer. This ssDNA/tRNA hybridizes with the identical R region situated at the 3' end of viral RNA. This template exchange, known as minus-strand DNA strong stop transfer, can be either intra- or intermolecular. RT uses the 3' end of this newly synthesized short ssDNA to perform the RNA-dependent minus-strand DNA synthesis of the whole template. RNase H digests the RNA template except for a polypurine tract (PPT) situated at the 5' end of the genome. It is not clear if both polymerase and RNase H activities are simultaneous. RNase H probably can proceed both in a polymerase-dependent (RNA cut into small fragments by the same RT performing DNA synthesis) and a polymerase-independent mode (cleavage of remaining RNA fragments by free RTs). Secondly, RT performs DNA-directed plus-strand DNA synthesis using the PPT that has not been removed by RNase H as primers. PPT and tRNA primers are then removed by RNase H. The 3' and 5' ssDNA PBS regions hybridize to form a circular dsDNA intermediate. Strand displacement synthesis by RT to the PBS and PPT ends produces a blunt ended, linear dsDNA copy of the viral genome that includes long terminal repeats (LTRs) at both ends. Functionally, catalyzes viral DNA integration into the host chromosome, by performing a series of DNA cutting and joining reactions. This enzyme activity takes place after virion entry into a cell and reverse transcription of the RNA genome in dsDNA. The first step in the integration process is 3' processing. This step requires a complex comprising the viral genome, matrix protein and integrase. This complex is called the pre-integration complex (PIC). The integrase protein removes 2 nucleotides from each 3' end of the viral DNA, leaving recessed CA OH's at the 3' ends. In the second step that requires cell division, the PIC enters cell nucleus. In the third step, termed strand transfer, the integrase protein joins the previously processed 3' ends to the 5' ends of strands of target cellular DNA at the site of integration. The last step is viral DNA integration into host chromosome. The sequence is that of Gag-Pol polyprotein (pol) from Feline leukemia virus.